The chain runs to 265 residues: O-methyltransferase NEC2 (265 aa).

Belongs to the methyltransferase superfamily.

It catalyses the reaction desmethylnectriapyrone + S-adenosyl-L-methionine = nectriapyrone + S-adenosyl-L-homocysteine + H(+). In terms of biological role, O-methyltransferase; part of the gene cluster that mediates the biosynthesis of nectriapyrone and its analogs phomopyrone A, acropyrone and zaepyrone. The nectriapyrone biosynthetic gene cluster consists of two genes, the highly reducing polyketide synthase NEC1 that produces a demethylated analog of nectriapyrone from one unit of acetyl-CoA and one unit of malonyl-CoA; and the O-methyltransferase NEC2 that further methylates the NEC1 product to yield nectriapyrone. Nectriapyrone is further hydrolyzed to nectriapyrone D, also known as gulypyrone B, by an unidentified hydrolase localized outside the nectriapyrone cluster. The protein is O-methyltransferase NEC2 of Pyricularia oryzae (strain 70-15 / ATCC MYA-4617 / FGSC 8958) (Rice blast fungus).